A 116-amino-acid polypeptide reads, in one-letter code: Non-specific lipid-transfer protein (116 aa).

A signal peptide spans 1-25; the sequence is MASMVMNVLCVAVACMVFSASYADA. Cystine bridges form between C28/C75, C38/C52, C53/C98, and C73/C112.

It belongs to the plant LTP family.

Plant non-specific lipid-transfer proteins transfer phospholipids as well as galactolipids across membranes. May play a role in wax or cutin deposition in the cell walls of expanding epidermal cells and certain secretory tissues. The sequence is that of Non-specific lipid-transfer protein from Gerbera hybrida (Daisy).